The sequence spans 79 residues: D-alanyl carrier protein (79 aa).

Residues 1–77 (MSTKETVIDL…KIIQGIEELQ (77 aa)) form the Carrier domain. Ser-35 bears the O-(pantetheine 4'-phosphoryl)serine mark.

The protein belongs to the DltC family. 4'-phosphopantetheine is transferred from CoA to a specific serine of apo-DCP.

It is found in the cytoplasm. It participates in cell wall biogenesis; lipoteichoic acid biosynthesis. Functionally, carrier protein involved in the D-alanylation of lipoteichoic acid (LTA). The loading of thioester-linked D-alanine onto DltC is catalyzed by D-alanine--D-alanyl carrier protein ligase DltA. The DltC-carried D-alanyl group is further transferred to cell membrane phosphatidylglycerol (PG) by forming an ester bond, probably catalyzed by DltD. D-alanylation of LTA plays an important role in modulating the properties of the cell wall in Gram-positive bacteria, influencing the net charge of the cell wall. This chain is D-alanyl carrier protein, found in Streptococcus equi subsp. equi (strain 4047).